The following is a 322-amino-acid chain: uncharacterized protein (322 aa).

8 consecutive transmembrane segments (helical) span residues 7 to 27 (IQKI…IGAI), 54 to 74 (AFAL…LAMF), 87 to 107 (FVGF…LSGS), 128 to 148 (IAFC…ITFV), 162 to 182 (FLSV…YLLI), 209 to 229 (IGLT…LLPG), 249 to 269 (GIIS…LFLL), and 287 to 307 (VIYY…FELL).

This sequence to E.coli YbhN.

Its subcellular location is the cell membrane. This is an uncharacterized protein from Synechocystis sp. (strain ATCC 27184 / PCC 6803 / Kazusa).